The primary structure comprises 7705 residues: Copine family protein 2 (7705 aa).

Disordered stretches follow at residues 1-61 (MNDY…RHSE), 269-360 (KEGN…NNSQ), 372-408 (SERKTAKQREQELLQRSERRSGGRTHSHEEYRRHQQP), 464-492 (GDRAHLQYRPRAQKGAAGPTTRGAPTSSV), 506-538 (STEPSPVPSRRALPKSASLSSVQQKQPIKTADG), 560-614 (DERA…QGPP), 1301-1358 (NRSE…DQQV), 4381-4427 (ELEP…RSES), and 6779-6800 (RDEHHEHISETKSYPRDGGKFT). Residues 12–25 (SSQKSNNQKISNNS) show a composition bias toward low complexity. Over residues 269-282 (KEGNNPSCCRERGT) the composition is skewed to basic and acidic residues. Residues 302 to 313 (STSTKVAVTSAS) show a composition bias toward low complexity. The segment covering 318–336 (IKDHKKQLKKEKEKKKKMD) has biased composition (basic residues). Over residues 372 to 404 (SERKTAKQREQELLQRSERRSGGRTHSHEEYRR) the composition is skewed to basic and acidic residues. Polar residues predominate over residues 522 to 532 (ASLSSVQQKQP). Basic and acidic residues predominate over residues 560–587 (DERAKDFLRGDRSSRLSPQSERKNERQI). Residues 588 to 597 (QIRQQSSGPT) are compositionally biased toward polar residues. 2 stretches are compositionally biased toward basic and acidic residues: residues 598-611 (NRRETEIEYEEKRQ) and 1301-1335 (NRSELREMRSEEKRSNSMHHEESHYAHSSYEHTSE). The segment covering 4397 to 4409 (RQSRVYRSSSQVR) has biased composition (low complexity). Basic and acidic residues-rich tracts occupy residues 4411–4427 (PSEESIQKTEALRRSES) and 6779–6797 (RDEHHEHISETKSYPRDGG). In terms of domain architecture, VWFA spans 7475–7673 (NLIFGIDYTK…FHKVMFNAPN (199 aa)).

It belongs to the copine family. Expressed in body wall muscle.

The sequence is that of Copine family protein 2 (cpna-2) from Caenorhabditis elegans.